The chain runs to 311 residues: Homeobox-leucine zipper protein HOX1 (311 aa).

Disordered regions lie at residues 29 to 69 (AGGA…SDHR) and 97 to 160 (AETT…KKLR). The segment covering 119-145 (SSPNSTLSSLSGKRGAPSAATAAAAAA) has biased composition (low complexity). The homeobox DNA-binding region spans 154-213 (GSRKKLRLSKDQAAVLEDTFKEHNTLNPKQKAALARQLNLKPRQVEVWFQNRRARTKLKQ). A leucine-zipper region spans residues 212–256 (KQTEVDCELLKRCCETLTDENRRLHRELQELRALKLATAAAAPHH). The disordered stretch occupies residues 279-311 (SAATTTRNNSGAAPARPVPTRPWPPAAAQRSSA). Positions 280-289 (AATTTRNNSG) are enriched in polar residues. Pro residues predominate over residues 294-303 (RPVPTRPWPP).

Belongs to the HD-ZIP homeobox family. Class II subfamily. In terms of assembly, homodimer. May form a heterodimer with HOX2, HOX3 or HOX7. Expressed in root provascular and vascular cylinder, provascular and vascular strands of leaves, provascular and vascular strands of the whole panicle, in mature embryo provascular bundles of scutellum and embryonic axis and provascular and vascular strands of young immature spikelet organs. Expressed in differentiating and differentiated xylem and phloem elements, and in outer and inner bundle sheath cells of all vascular bundles. Expressed in auricles, ligules, culm, guard cells brac hairs and pollen.

It is found in the nucleus. Its function is as follows. Probable transcription repressor involved leaf development. Binds to the DNA sequence 5'-CAAT[GC]ATTG-3'. May act as a regulatory switch to specify provascular cell fate. This Oryza sativa subsp. indica (Rice) protein is Homeobox-leucine zipper protein HOX1 (HOX1).